We begin with the raw amino-acid sequence, 412 residues long: Mannose-6-phosphate isomerase (412 aa).

Residues Gln99, His101, Glu126, and His265 each coordinate Zn(2+). Arg284 is a catalytic residue.

It belongs to the mannose-6-phosphate isomerase type 1 family. Zn(2+) is required as a cofactor.

It localises to the cytoplasm. Its subcellular location is the nucleus. The catalysed reaction is D-mannose 6-phosphate = D-fructose 6-phosphate. It functions in the pathway nucleotide-sugar biosynthesis; GDP-alpha-D-mannose biosynthesis; alpha-D-mannose 1-phosphate from D-fructose 6-phosphate: step 1/2. Its function is as follows. Involved in the synthesis of the GDP-mannose and dolichol-phosphate-mannose required for a number of critical mannosyl transfer reactions. This Schizosaccharomyces pombe (strain 972 / ATCC 24843) (Fission yeast) protein is Mannose-6-phosphate isomerase (pmi40).